We begin with the raw amino-acid sequence, 139 residues long: Protein archease (139 aa).

Ca(2+) is bound by residues D12, D138, and I139.

The protein belongs to the archease family.

Its function is as follows. Activates the tRNA-splicing ligase complex by facilitating the enzymatic turnover of catalytic subunit RtcB. Acts by promoting the guanylylation of RtcB, a key intermediate step in tRNA ligation. Can also alter the NTP specificity of RtcB such that ATP, dGTP or ITP is used efficiently. The polypeptide is Protein archease (Saccharolobus solfataricus (strain ATCC 35092 / DSM 1617 / JCM 11322 / P2) (Sulfolobus solfataricus)).